We begin with the raw amino-acid sequence, 509 residues long: Zinc finger protein Aiolos (509 aa).

The span at 1-19 (MEDIQTNAELKSTQEQSVP) shows a compositional bias: polar residues. Residues 1 to 86 (MEDIQTNAEL…MGNAEEPEIP (86 aa)) are disordered. Phosphoserine occurs at positions 22 and 42. Positions 56 to 72 (DSMKVKDEYSERDENVL) are enriched in basic and acidic residues. Residues Lys61, Lys73, and Lys100 each participate in a glycyl lysine isopeptide (Lys-Gly) (interchain with G-Cter in SUMO2) cross-link. C2H2-type zinc fingers lie at residues 118–140 (MNCDVCGLSCISFNVLMVHKRSH), 146–168 (FQCNQCGASFTQKGNLLRHIKLH), and 174–196 (FKCHLCNYACQRRDALTGHLRTH). The C2H2-type 4; atypical zinc-finger motif lies at 202-224 (YKCEFCGRSYKQRSSLEEHKERC). Lys245 is covalently cross-linked (Glycyl lysine isopeptide (Lys-Gly) (interchain with G-Cter in SUMO2)). A Phosphothreonine modification is found at Thr326. The segment at 364–394 (IHLPEKSVPSERGLSPNNSGHDSTDTDSNHE) is disordered. At Ser378 the chain carries Phosphoserine. The segment covering 385–394 (DSTDTDSNHE) has biased composition (basic and acidic residues). A C2H2-type 5 zinc finger spans residues 452-474 (YRCDHCRVLFLDYVMFTIHMGCH). Residues 452-504 (YRCDHCRVLFLDYVMFTIHMGCHGFRDPFECNMCGYRSHDRYEFSSHIARGEH) are mediates homodimerization and heterodimerization. A C2H2-type 6; atypical zinc finger spans residues 480–504 (FECNMCGYRSHDRYEFSSHIARGEH).

This sequence belongs to the Ikaros C2H2-type zinc-finger protein family. Homodimer. Heterodimer with other IKAROS family members. Interacts with IKZF4 and IKZF5. Interacts with IKZF1. Interacts with HRAS. Interacts with FOXP3; this interaction may be required for silencing target genes and regulating the suppressive activity of FOXP3-positive regulatory T-cells (Treg). Interacts with BCL21L isoform Bcl-X(L); this interaction blocks the anti-apoptotic role of BCL21L. Associates with histone deacetylase complexes containing HDAC1, MTA2 and SIN3A. Post-translationally, phosphorylation on tyrosine residues induced by IL2 is required for dissociation from HRAS and nuclear translocation of IKZF3 in T-cells. Phosphorylation on tyrosine residues induced by IL4 is required for dissociation from Bcl-X(L) in T-cells. In terms of tissue distribution, expressed most strongly in peripheral blood leukocytes, the spleen, and the thymus.

The protein localises to the nucleus. It localises to the cytoplasm. Transcription factor that plays an important role in the regulation of lymphocyte differentiation. Plays an essential role in regulation of B-cell differentiation, proliferation and maturation to an effector state. Involved in regulating BCL2 expression and controlling apoptosis in T-cells in an IL2-dependent manner. In Homo sapiens (Human), this protein is Zinc finger protein Aiolos (IKZF3).